Consider the following 260-residue polypeptide: Type III pantothenate kinase (260 aa).

ATP is bound at residue 6 to 13 (DCGNTNTV). Position 107–110 (107–110 (GPDR)) interacts with substrate. Asp109 acts as the Proton acceptor in catalysis. Asp129 provides a ligand contact to K(+). Thr132 contacts ATP. Thr184 is a binding site for substrate.

Belongs to the type III pantothenate kinase family. Homodimer. It depends on NH4(+) as a cofactor. K(+) serves as cofactor.

The protein localises to the cytoplasm. It carries out the reaction (R)-pantothenate + ATP = (R)-4'-phosphopantothenate + ADP + H(+). It participates in cofactor biosynthesis; coenzyme A biosynthesis; CoA from (R)-pantothenate: step 1/5. Catalyzes the phosphorylation of pantothenate (Pan), the first step in CoA biosynthesis. This chain is Type III pantothenate kinase, found in Ruegeria sp. (strain TM1040) (Silicibacter sp.).